Consider the following 397-residue polypeptide: Linalool dehydratase/isomerase (397 aa).

Positions Met1–Ala26 are cleaved as a signal peptide. The Proton donor/acceptor role is filled by Asp64. Cystine bridges form between Cys74–Cys127 and Cys196–Cys205. A (2E)-geraniol-binding site is contributed by Cys196.

Homotetramer. Homopentamer.

Its subcellular location is the periplasm. The catalysed reaction is (S)-linalool = beta-myrcene + H2O. It catalyses the reaction (2E)-geraniol = (S)-linalool. It functions in the pathway terpene metabolism; monoterpene degradation. Is inhibited by molecular oxygen, high salt concentrations (NaCl, KCl, or MgCl(2)), urea, and Ti(III)citrate. Activity is not affected by EDTA. Anaerobically catalyzes the stereospecific hydration of beta-myrcene to (3S)-linalool and the isomerization of (3S)-linalool to geraniol. Is thus involved in the initial steps of the anaerobic degradation of the monoterpene beta-myrcene. Also catalyzes the reverse reactions, i.e. the isomerization of geraniol to linalool and the dehydration of linalool to myrcene. In this direction, the formation of myrcene from geraniol may be seen as a detoxification process for the monoterpene alcohol. Shows a relatively broad substrate specificity and can use various geraniol and linalool derivatives. Substrates required a specific alpha-methylallyl alcohol signature motif. Neither the monoterpenes alpha- and beta-ocimene nor the monoterpenoids citronellol and nerol can be used as substrates. The sequence is that of Linalool dehydratase/isomerase from Castellaniella defragrans (strain DSM 12143 / CCUG 39792 / 65Phen) (Alcaligenes defragrans).